Reading from the N-terminus, the 224-residue chain is Ribosomal RNA small subunit methyltransferase I (224 aa).

Belongs to the methyltransferase superfamily. RsmI family.

It localises to the cytoplasm. It catalyses the reaction cytidine(1402) in 16S rRNA + S-adenosyl-L-methionine = 2'-O-methylcytidine(1402) in 16S rRNA + S-adenosyl-L-homocysteine + H(+). Functionally, catalyzes the 2'-O-methylation of the ribose of cytidine 1402 (C1402) in 16S rRNA. This is Ribosomal RNA small subunit methyltransferase I from Borrelia garinii subsp. bavariensis (strain ATCC BAA-2496 / DSM 23469 / PBi) (Borreliella bavariensis).